We begin with the raw amino-acid sequence, 188 residues long: Pyridoxal 5'-phosphate synthase subunit PdxT (188 aa).

Gly-46–Ser-48 contributes to the L-glutamine binding site. Cys-78 functions as the Nucleophile in the catalytic mechanism. L-glutamine-binding positions include Arg-106 and Ile-132–Arg-133. Active-site charge relay system residues include His-169 and Glu-171.

The protein belongs to the glutaminase PdxT/SNO family. In the presence of PdxS, forms a dodecamer of heterodimers. Only shows activity in the heterodimer.

It carries out the reaction aldehydo-D-ribose 5-phosphate + D-glyceraldehyde 3-phosphate + L-glutamine = pyridoxal 5'-phosphate + L-glutamate + phosphate + 3 H2O + H(+). The catalysed reaction is L-glutamine + H2O = L-glutamate + NH4(+). Its pathway is cofactor biosynthesis; pyridoxal 5'-phosphate biosynthesis. Its function is as follows. Catalyzes the hydrolysis of glutamine to glutamate and ammonia as part of the biosynthesis of pyridoxal 5'-phosphate. The resulting ammonia molecule is channeled to the active site of PdxS. This is Pyridoxal 5'-phosphate synthase subunit PdxT from Tropheryma whipplei (strain TW08/27) (Whipple's bacillus).